The primary structure comprises 927 residues: Alpha-catenin-like protein hmp-1 (927 aa).

2 coiled-coil regions span residues 319–354 (TREN…RRDD) and 672–696 (QENQ…QIDI). The interval 901 to 927 (RNEIETGRDSDDEELDRRHQQRINGRL) is disordered.

It belongs to the vinculin/alpha-catenin family. In terms of assembly, component of a core catenin-cadherin complex consisting of hmr-1, hmp-1 and hmp-2; the complex localizes to adherens junctions. May interact with hmp-2. In terms of tissue distribution, epidermal cells.

Its subcellular location is the cell junction. It localises to the adherens junction. It is found in the cytoplasm. Functionally, required for cell migration during body enclosure and cell shape changes during body elongation. Required for proper localization of other junctional components, such as pac-1. The protein is Alpha-catenin-like protein hmp-1 (hmp-1) of Caenorhabditis elegans.